Here is a 375-residue protein sequence, read N- to C-terminus: DNA replication and repair protein RecF (375 aa).

30-37 (GDNAQGKS) is a binding site for ATP.

The protein belongs to the RecF family.

The protein localises to the cytoplasm. The RecF protein is involved in DNA metabolism; it is required for DNA replication and normal SOS inducibility. RecF binds preferentially to single-stranded, linear DNA. It also seems to bind ATP. The polypeptide is DNA replication and repair protein RecF (Gloeobacter violaceus (strain ATCC 29082 / PCC 7421)).